Here is a 266-residue protein sequence, read N- to C-terminus: MAKMTTLKMKERLEKELKAPNRQFAYNRDNDTLSITQDGKKVTLTIPQIIANYENDGDEAIEKIIYYVEEGFQAASGKVELRNNQSNIYPVVRATSFPVETKTGERLLADEHTAETKIFYAFDLGKSYRFIEESMLEKENITREQIREFAFQNLAKLDIPLKKDSVNGNDFYFVRTNDGYDASRLLNVNFLRDMREKLTGEMVLAVPHQDVLIIGDIQDNTGYDVLAHMTMDFFADGLVPITSLPFVYNNGKLEPIFIMAKNRLKE.

This sequence belongs to the UPF0354 family.

The chain is UPF0354 protein lwe1624 from Listeria welshimeri serovar 6b (strain ATCC 35897 / DSM 20650 / CCUG 15529 / CIP 8149 / NCTC 11857 / SLCC 5334 / V8).